We begin with the raw amino-acid sequence, 129 residues long: Glycine cleavage system H protein (129 aa).

Positions 24-106 (SYTVGITEHA…YGEGWFFRVM (83 aa)) constitute a Lipoyl-binding domain. The residue at position 65 (Lys65) is an N6-lipoyllysine.

The protein belongs to the GcvH family. In terms of assembly, the glycine cleavage system is composed of four proteins: P, T, L and H. Requires (R)-lipoate as cofactor.

Functionally, the glycine cleavage system catalyzes the degradation of glycine. The H protein shuttles the methylamine group of glycine from the P protein to the T protein. This Shewanella sp. (strain MR-7) protein is Glycine cleavage system H protein.